Here is a 269-residue protein sequence, read N- to C-terminus: Enoyl-[acyl-carrier-protein] reductase [NADH] (269 aa).

NAD(+) is bound by residues 20–21 (SI), 64–65 (DV), and 95–96 (IG). Y158 is a substrate binding site. Residues K165 and I194 each contribute to the NAD(+) site.

This sequence belongs to the short-chain dehydrogenases/reductases (SDR) family. FabI subfamily. In terms of assembly, homodimer. Homotetramer.

It carries out the reaction a 2,3-saturated acyl-[ACP] + NAD(+) = a (2E)-enoyl-[ACP] + NADH + H(+). The catalysed reaction is a 2,3-saturated acyl-CoA + NAD(+) = a (2E)-enoyl-CoA + NADH + H(+). It participates in lipid metabolism; mycolic acid biosynthesis. Enoyl-ACP reductase of the type II fatty acid syntase (FAS-II) system, which is involved in the biosynthesis of mycolic acids, a major component of mycobacterial cell walls. Catalyzes the NADH-dependent reduction of the double bond of 2-trans-enoyl-[acyl-carrier protein], an essential step in the fatty acid elongation cycle of the FAS-II pathway. Shows preference for long-chain fatty acyl thioester substrates, and can also use 2-trans-enoyl-CoAs as alternative substrates. The mycobacterial FAS-II system utilizes the products of the FAS-I system as primers to extend fatty acyl chain lengths up to C56, forming the meromycolate chain that serves as the precursor for final mycolic acids. Its function is as follows. Is the primary target of the first-line antitubercular drug isoniazid (INH) and of the second-line drug ethionamide (ETH). Overexpressed inhA confers INH and ETH resistance to M.bovis. The mechanism of isoniazid action against InhA is covalent attachment of the activated form of the drug to the nicotinamide ring of NAD and binding of the INH-NAD adduct to the active site of InhA. Similarly, the ETH-NAD adduct binds InhA. The protein is Enoyl-[acyl-carrier-protein] reductase [NADH] of Mycobacterium bovis (strain ATCC BAA-935 / AF2122/97).